Reading from the N-terminus, the 448-residue chain is UPF0053 protein sll0260 (448 aa).

Residues 2-203 enclose the CNNM transmembrane domain; it reads FSSSVELELF…AQAGMIDEAE (202 aa). Transmembrane regions (helical) follow at residues 11–31, 62–82, 106–126, and 142–162; these read FFIF…IAIV, FLSA…AVGG, LSIS…GELV, and VAPA…LLGV. CBS domains lie at 222 to 281 and 286 to 345; these read MTPR…GQKI and IVQP…NDDE.

This sequence belongs to the UPF0053 family.

It localises to the cell membrane. This Synechocystis sp. (strain ATCC 27184 / PCC 6803 / Kazusa) protein is UPF0053 protein sll0260.